The primary structure comprises 321 residues: MSGAKSAQGPEEGGVCITEALITKRNLTFPEDEELSEKMFHTLDELQTVRLDREGITTIRNLEGLKNLHSLYLQGNKIQQIENLACVPSLRFLSLAGNQIRQVENLLDLPCLQFLDLSENLIETLKLDEFPQSLLILNLSGNSCTNQDSYRELVIEALPLLLDLDGQPVMERWISDEEDEASSEEEFPELSGPFCSERGFLKELEQELSRHREHRQQAALTQHLLRMEMQPTLTNLPLLPGVPMAGDSSPSTTPGQGEETVPEAVSSPQASSPTKKPCSLIPRGRQNSLWGRKGVRASTVPKASVAEAPSTTKTMAKRSKK.

LRR repeat units follow at residues 45–66, 67–88, 89–110, and 111–132; these read ELQT…EGLK, NLHS…ACVP, SLRF…LDLP, and CLQF…EFPQ. The LRRCT domain maps to 142-184; that stretch reads NSCTNQDSYRELVIEALPLLLDLDGQPVMERWISDEEDEASSE. A phosphoserine mark is found at S175 and S182. Residues 198 to 222 are a coiled coil; the sequence is RGFLKELEQELSRHREHRQQAALTQ. Residues 235-321 form a disordered region; sequence NLPLLPGVPM…TKTMAKRSKK (87 aa).

The protein localises to the cell projection. Its subcellular location is the cilium. It is found in the flagellum. Functionally, required for normal spermatogenesis and male fertility. Plays an important role in sperm flagellum biogenesis. The chain is Leucine-rich repeat-containing protein 46 (LRRC46) from Macaca fascicularis (Crab-eating macaque).